We begin with the raw amino-acid sequence, 509 residues long: ATP synthase subunit beta, mitochondrial (509 aa).

The transit peptide at 1-32 (MVLPRLIPRLSRSAFKVAQANNRVFNAPFRGM) directs the protein to the mitochondrion. 189–196 (GAGVGKTV) provides a ligand contact to ATP.

F-type ATP synthases have 2 components, the catalytic core F(1) and the membrane-embedded component F(0), linked together by a central stalk and a peripheral stalk. The central stalk, also called rotor shaft, is often seen as part of F(1). The peripheral stalk is seen as part of F(0). F(0) contains the membrane channel next to the rotor. F-type ATP synthases form dimers but each monomer functions independently in ATP generation. The dimer consists of 17 different polypeptides: ATP1 (subunit alpha, 3 molecules per monomer, part of F(1)), ATP2 (subunit beta, 3 copies per monomer, part of F(1)), ATP3 (subunit gamma, part of the central stalk), ATP4 (subunit b, part of the peripheral stalk), ATP5/OSCP (subunit 5/OSCP, part of the peripheral stalk), ATP6 (subunit a, part of the peripheral stalk), ATP7 (subunit d, part of the peripheral stalk), ATP8 (subunit 8, part of the peripheral stalk), OLI1 (subunit c, part of the rotor, 10 molecules per monomer), ATP14 (subunit h, part of the peripheral stalk), ATP15 (subunit epsilon, part of the central stalk), ATP16 (subunit delta, part of the central stalk), ATP17 (subunit f, part of the peripheral stalk), ATP18 (subunit i/j, part of the peripheral stalk), ATP19 (subunit k, dimer-specific, at interface between monomers), ATP20 (subunit g, at interface between monomers), TIM11 (subunit e, at interface between monomers).

The protein localises to the mitochondrion inner membrane. It catalyses the reaction ATP + H2O + 4 H(+)(in) = ADP + phosphate + 5 H(+)(out). Mitochondrial membrane ATP synthase (F(1)F(0) ATP synthase or Complex V) produces ATP from ADP in the presence of a proton gradient across the membrane which is generated by electron transport complexes of the respiratory chain. F-type ATP synthases consist of two structural domains, F(1) - containing the extramembraneous catalytic core, and F(0) - containing the membrane proton channel, linked together by a central stalk and a peripheral stalk. During catalysis, ATP synthesis in the catalytic domain of F(1) is coupled via a rotary mechanism of the central stalk subunits to proton translocation. Subunits alpha/ATP1 and beta/ATP2 form the catalytic core in F(1). Rotation of the central stalk against the surrounding alpha/ATP1(3)beta/ATP2(3) subunits leads to hydrolysis of ATP in three separate catalytic sites on the beta/ATP2 subunits. This chain is ATP synthase subunit beta, mitochondrial, found in Yarrowia lipolytica (strain CLIB 122 / E 150) (Yeast).